Here is a 342-residue protein sequence, read N- to C-terminus: Isopentenyl-diphosphate delta-isomerase (342 aa).

A substrate-binding site is contributed by 11–12 (RK). FMN is bound by residues Ser-68, 69–71 (SMT), Ser-99, and Asn-128. Substrate is bound at residue 99 to 101 (SQR). Gln-162 is a substrate binding site. Glu-163 contributes to the Mg(2+) binding site. FMN contacts are provided by residues Lys-194, Ser-219, Thr-224, 275 to 277 (GVR), and 296 to 297 (AK).

This sequence belongs to the IPP isomerase type 2 family. In terms of assembly, homooctamer. Dimer of tetramers. The cofactor is FMN. Requires NADPH as cofactor. It depends on Mg(2+) as a cofactor.

The protein resides in the cytoplasm. The catalysed reaction is isopentenyl diphosphate = dimethylallyl diphosphate. Its function is as follows. Involved in the biosynthesis of isoprenoids. Catalyzes the 1,3-allylic rearrangement of the homoallylic substrate isopentenyl (IPP) to its allylic isomer, dimethylallyl diphosphate (DMAPP). The polypeptide is Isopentenyl-diphosphate delta-isomerase (Legionella pneumophila (strain Paris)).